The chain runs to 1097 residues: Nitric oxide synthase-like protein (1097 aa).

Cysteine 77 is a binding site for heme b. 5 residues coordinate L-arginine: glutamine 140, tryptophan 249, tyrosine 250, glutamate 254, and asparagine 259. Tryptophan 340 and phenylalanine 353 together coordinate (6R)-L-erythro-5,6,7,8-tetrahydrobiopterin. Tyrosine 368 is a heme b binding site. The interval 387-410 (KRPINRKFHFKQIARAVKFTSKLF) is calmodulin-binding. One can recognise a Flavodoxin-like domain in the interval 420–615 (ATVLYATETG…AFRKWASSVF (196 aa)). Residues 426–430 (TETGK) and 561–592 (VFAL…ERIH) contribute to the FMN site. Positions 669-914 (KQFVSCTVKA…IRSAPNFHLP (246 aa)) constitute an FAD-binding FR-type domain. Residues 704 to 715 (YNPGDHVGIIAC) and 847 to 857 (LQPRFYSISSS) each bind FAD. NADP(+) contacts are provided by residues 922-940 (ILIG…WHHR) and 1019-1034 (GAHF…AEDV).

Belongs to the NOS family. It depends on heme b as a cofactor. FAD is required as a cofactor. FMN serves as cofactor.

The catalysed reaction is 2 L-arginine + 3 NADPH + 4 O2 + H(+) = 2 L-citrulline + 2 nitric oxide + 3 NADP(+) + 4 H2O. Its function is as follows. Produces nitric oxide (NO) which is a messenger molecule with diverse functions throughout the body. The protein is Nitric oxide synthase-like protein of Bombyx mori (Silk moth).